A 241-amino-acid polypeptide reads, in one-letter code: Neuroendocrine secretory protein 55 (241 aa).

Residues 1 to 46 form the signal peptide; sequence MDRRSRPQLGRRARHNYNDLCPPIGRRAATALLWLSCSIALLRALA. A disordered region spans residues 71 to 241; sequence AAQVFPEPPE…KRGAIPIRRH (171 aa). Residues 97-125 show a composition bias toward acidic residues; the sequence is EYQEEEFDYESETESESEIESETEFETES. Residues 167–177 show a composition bias toward low complexity; sequence PDASPSRAPPS. Positions 182-198 are enriched in basic and acidic residues; it reads ESPRQGEEPEDKDPRDP. Residues 212-221 show a composition bias toward basic residues; it reads QHRCKPKKPT.

The protein belongs to the NESP55 family. In terms of processing, binds keratan sulfate chains. Post-translationally, may be proteolytically processed to give rise to a number of active peptides. As to expression, highly expressed in adrenal medulla and anterior and posterior pituitary. In the brain, detected in hypothalamus, hippocampus, caudate nucleus, thalamus and, in significantly lower amounts, in the cerebellum.

It is found in the cytoplasmic vesicle. Its subcellular location is the secretory vesicle. The protein resides in the secreted. This is Neuroendocrine secretory protein 55 from Bos taurus (Bovine).